Consider the following 232-residue polypeptide: Orotidine 5'-phosphate decarboxylase (232 aa).

Substrate is bound by residues Asp11, Lys33, 60-69, Thr120, Arg181, Gln191, Gly211, and Arg212; that span reads DLKFHDIPTT. Lys62 (proton donor) is an active-site residue.

The protein belongs to the OMP decarboxylase family. Type 1 subfamily. As to quaternary structure, homodimer.

It carries out the reaction orotidine 5'-phosphate + H(+) = UMP + CO2. It functions in the pathway pyrimidine metabolism; UMP biosynthesis via de novo pathway; UMP from orotate: step 2/2. Its function is as follows. Catalyzes the decarboxylation of orotidine 5'-monophosphate (OMP) to uridine 5'-monophosphate (UMP). This Tolumonas auensis (strain DSM 9187 / NBRC 110442 / TA 4) protein is Orotidine 5'-phosphate decarboxylase.